The primary structure comprises 195 residues: HTH-type transcriptional regulator BetI (195 aa).

The HTH tetR-type domain occupies 8-68; that stretch reads SIRRRQLIDA…ATMRDITSQL (61 aa). Positions 31-50 form a DNA-binding region, H-T-H motif; the sequence is TIAQIARRAGVSTGIISHYF.

Its pathway is amine and polyamine biosynthesis; betaine biosynthesis via choline pathway [regulation]. Repressor involved in the biosynthesis of the osmoprotectant glycine betaine. It represses transcription of the choline transporter BetT and the genes of BetAB involved in the synthesis of glycine betaine. The polypeptide is HTH-type transcriptional regulator BetI (Escherichia coli (strain UTI89 / UPEC)).